A 180-amino-acid polypeptide reads, in one-letter code: ATP-dependent protease subunit HslV (180 aa).

The active site involves T5. Positions 165, 168, and 171 each coordinate Na(+).

It belongs to the peptidase T1B family. HslV subfamily. As to quaternary structure, a double ring-shaped homohexamer of HslV is capped on each side by a ring-shaped HslU homohexamer. The assembly of the HslU/HslV complex is dependent on binding of ATP.

It is found in the cytoplasm. It carries out the reaction ATP-dependent cleavage of peptide bonds with broad specificity.. Its activity is regulated as follows. Allosterically activated by HslU binding. In terms of biological role, protease subunit of a proteasome-like degradation complex believed to be a general protein degrading machinery. The sequence is that of ATP-dependent protease subunit HslV from Helicobacter acinonychis (strain Sheeba).